We begin with the raw amino-acid sequence, 181 residues long: Putative ankyrin repeat protein RF_0782 (181 aa).

2 ANK repeats span residues 24-53 (YHYS…DINF) and 54-83 (GSTP…NTQI).

The chain is Putative ankyrin repeat protein RF_0782 from Rickettsia felis (strain ATCC VR-1525 / URRWXCal2) (Rickettsia azadi).